A 484-amino-acid polypeptide reads, in one-letter code: MTKPIRVRYAPSPTGLLHIGNARTALFNYLFARHHGGTFLIRIEDTDRKRHVEDGERSQLENLRWLGIDWDESPETHENYRQSERLDIYQKYVDQLLAEGKAYKSYVTEEELAAERERQEAAGETPRYINEYLGMSEDEKTAYIAEREAAGIVPTVRLAVNEAGIYKWNDIVKGEIEFEGGNIGGDWVIQKRDGYPTYNFAVVIDDYLMKISHVIRGDDHIANTPKQLMVYEALGWEAPEFGHMTLIINSETGKKLSKRDTNTLQFIEDYRRKGYMPEAVFNFIGLLGWNPGGEEEIFSREQFIQLFDENRLSKSPAAFDQKKMDWMSNEYIKNADLETIFNLAKPFLEEAGRLTDKAEKLVELYKPQMSSADEIVGLTDLFFSDFPELTAEEKEVMAGETVPTVLNALKEKLEAMTDEDFQPDNIFPQIKAVQKETGIKGKNLFMPIRIAVSGEMHGPELPNTIYLLGREKSIQHIDNMLKSL.

The 'HIGH' region signature appears at 11-21; the sequence is PSPTGLLHIGN. The short motif at 255–259 is the 'KMSKS' region element; it reads KLSKR. K258 is a binding site for ATP.

This sequence belongs to the class-I aminoacyl-tRNA synthetase family. Glutamate--tRNA ligase type 1 subfamily. As to quaternary structure, monomer.

The protein resides in the cytoplasm. It carries out the reaction tRNA(Glu) + L-glutamate + ATP = L-glutamyl-tRNA(Glu) + AMP + diphosphate. In terms of biological role, catalyzes the attachment of glutamate to tRNA(Glu) in a two-step reaction: glutamate is first activated by ATP to form Glu-AMP and then transferred to the acceptor end of tRNA(Glu). The polypeptide is Glutamate--tRNA ligase (Streptococcus suis (strain 98HAH33)).